The sequence spans 1071 residues: DNA-directed RNA polymerase subunit beta (1071 aa).

It belongs to the RNA polymerase beta chain family. In terms of assembly, in plastids the minimal PEP RNA polymerase catalytic core is composed of four subunits: alpha, beta, beta', and beta''. When a (nuclear-encoded) sigma factor is associated with the core the holoenzyme is formed, which can initiate transcription.

The protein resides in the plastid. It is found in the chloroplast. The enzyme catalyses RNA(n) + a ribonucleoside 5'-triphosphate = RNA(n+1) + diphosphate. DNA-dependent RNA polymerase catalyzes the transcription of DNA into RNA using the four ribonucleoside triphosphates as substrates. The chain is DNA-directed RNA polymerase subunit beta from Drimys granadensis.